The primary structure comprises 81 residues: Protein Vpu (81 aa).

Residues 1–7 (MQPLQIL) lie on the Extracellular side of the membrane. A helical membrane pass occupies residues 8 to 28 (SIVALVVAAIIAIVVWSIVFI). Residues 29–81 (LIRKILRQRKIDRLIDRIRERAEDSGNESEGIRKELSALVEMGHDAPGDIDDL) lie on the Cytoplasmic side of the membrane. A phosphoserine; by host CK2 mark is found at Ser53 and Ser57.

It belongs to the HIV-1 VPU protein family. As to quaternary structure, homopentamer. Interacts with host CD4 and BRTC; these interactions induce proteasomal degradation of CD4. Interacts with host BST2; this interaction leads to the degradation of host BST2. Interacts with host FBXW11. Interacts with host AP1M1; this interaction plays a role in the mistrafficking and subsequent degradation of host BST2. Interacts with host RANBP2; this interaction allows Vpu to down-regulate host BLM sumoylation. In terms of processing, phosphorylated by host CK2. This phosphorylation is necessary for interaction with human BTRC and degradation of CD4.

The protein localises to the host membrane. Its activity is regulated as follows. Ion channel activity is inhibited by hexamethylene amiloride in vitro. Enhances virion budding by targeting host CD4 and Tetherin/BST2 to proteasome degradation. Degradation of CD4 prevents any unwanted premature interactions between viral Env and its host receptor CD4 in the endoplasmic reticulum. Degradation of antiretroviral protein Tetherin/BST2 is important for virion budding, as BST2 tethers new viral particles to the host cell membrane. Mechanistically, Vpu bridges either CD4 or BST2 to BTRC, a substrate recognition subunit of the Skp1/Cullin/F-box protein E3 ubiquitin ligase, induces their ubiquitination and subsequent proteasomal degradation. The alteration of the E3 ligase specificity by Vpu seems to promote the degradation of host IKBKB, leading to NF-kappa-B down-regulation and subsequent apoptosis. Acts as a viroporin that forms an oligomeric ion channel in membranes. Modulates the host DNA repair mechanisms to promote degradation of nuclear viral cDNA in cells that are already productively infected in order to suppress immune sensing and proviral hyper-integration (superinfection). Manipulates PML-NBs and modulates SUMOylation of host BLM protein thereby enhancing its DNA-end processing activity toward viral unintegrated linear DNA. Also inhibits RAD52-mediated homologous repair of viral cDNA, preventing the generation of dead-end circular forms of single copies of the long terminal repeat and permitting sustained nucleolytic attack. This Homo sapiens (Human) protein is Protein Vpu.